An 865-amino-acid chain; its full sequence is Leucine--tRNA ligase (865 aa).

A 'HIGH' region motif is present at residues 58-68 (PYPSGNLHMGH). The short motif at 629–633 (KMSKS) is the 'KMSKS' region element. K632 contacts ATP.

Belongs to the class-I aminoacyl-tRNA synthetase family.

Its subcellular location is the cytoplasm. The catalysed reaction is tRNA(Leu) + L-leucine + ATP = L-leucyl-tRNA(Leu) + AMP + diphosphate. This is Leucine--tRNA ligase from Synechococcus elongatus (strain ATCC 33912 / PCC 7942 / FACHB-805) (Anacystis nidulans R2).